The sequence spans 604 residues: Prostaglandin G/H synthase 2 (604 aa).

Residues 1–17 (MLARALLLCAVLALSHT) form the signal peptide. The 38-residue stretch at 18–55 (ANPCCSHPCQNRGVCMSVGFDQYKCDCTRTGFYGENCS) folds into the EGF-like domain. 4 disulfide bridges follow: cysteine 21-cysteine 32, cysteine 22-cysteine 145, cysteine 26-cysteine 42, and cysteine 44-cysteine 54. A glycan (N-linked (GlcNAc...) asparagine) is linked at asparagine 53. Arginine 106 contributes to the substrate binding site. The N-linked (GlcNAc...) asparagine glycan is linked to asparagine 130. Residue histidine 193 is the Proton acceptor of the active site. Tyrosine 341 lines the substrate pocket. Tyrosine 371 serves as the catalytic For cyclooxygenase activity. Histidine 374 provides a ligand contact to heme b. The N-linked (GlcNAc...) asparagine glycan is linked to asparagine 396. An S-nitrosocysteine modification is found at cysteine 526. Cysteine 555 and cysteine 561 are oxidised to a cystine. At serine 565 the chain carries O-acetylserine. An N-linked (GlcNAc...) asparagine glycan is attached at asparagine 580.

Belongs to the prostaglandin G/H synthase family. As to quaternary structure, homodimer. The cofactor is heme b. S-nitrosylation by NOS2 (iNOS) activates enzyme activity. S-nitrosylation may take place on different Cys residues in addition to Cys-526. In terms of processing, acetylated at Ser-565 by SPHK1. During neuroinflammation, acetylation by SPHK1 promotes neuronal secretion of specialized preresolving mediators (SPMs), especially 15-R-lipoxin A4, which results in an increase of phagocytic microglia.

It is found in the microsome membrane. The protein resides in the endoplasmic reticulum membrane. It localises to the nucleus inner membrane. Its subcellular location is the nucleus outer membrane. It carries out the reaction (5Z,8Z,11Z,14Z)-eicosatetraenoate + AH2 + 2 O2 = prostaglandin H2 + A + H2O. The enzyme catalyses (5Z,8Z,11Z,14Z)-eicosatetraenoate + 2 O2 = prostaglandin G2. The catalysed reaction is prostaglandin G2 + AH2 = prostaglandin H2 + A + H2O. It catalyses the reaction (5Z,8Z,11Z,14Z,17Z)-eicosapentaenoate + 2 O2 = prostaglandin G3. It carries out the reaction prostaglandin G3 + AH2 = prostaglandin H3 + A + H2O. The enzyme catalyses (8Z,11Z,14Z)-eicosatrienoate + 2 O2 = prostaglandin G1. The catalysed reaction is prostaglandin G1 + AH2 = prostaglandin H1 + A + H2O. It catalyses the reaction 2-(5Z,8Z,11Z,14Z)-eicosatetraenoyl-sn-glycero-3-phosphoethanolamine + 2 O2 = 2-(prostaglandin G2)-sn-glycero-3-phosphoethanolamine. It carries out the reaction 2-(prostaglandin G2)-sn-glycero-3-phosphoethanolamine + AH2 = 2-(prostaglandin H2)-sn-glycero-3-phosphoethanolamine + A + H2O. The enzyme catalyses 2-(5Z,8Z,11Z,14Z)-eicosatetraenoyl-sn-glycero-3-phosphocholine + 2 O2 = 2-(prostaglandin G2)-sn-glycero-3-phosphocholine. The catalysed reaction is 2-(prostaglandin G2)-sn-glycero-3-phosphocholine + AH2 = 2-(prostaglandin H2)-sn-glycero-3-phosphocholine + A + H2O. It catalyses the reaction (15S)-hydroperoxy-(5Z,8Z,11Z,13E)-eicosatetraenoate + AH2 = (15S)-hydroxy-(5Z,8Z,11Z,13E)-eicosatetraenoate + A + H2O. It carries out the reaction 2-(5Z,8Z,11Z,14Z)-eicosatetraenoyl-sn-glycero-3-phosphocholine + AH2 + O2 = 2-[(15S)-hydroxy-(5Z,8Z,11Z,13E)-eicosatetraenoyl]-sn-glycero-3-phosphocholine + A + H2O. The enzyme catalyses 2-(5Z,8Z,11Z,14Z)-eicosatetraenoyl-sn-glycero-3-phosphocholine + AH2 + O2 = 2-[(15R)-hydroxy-(5Z,8Z,11Z,13E)-eicosatetraenoyl]-sn-glycero-3-phosphocholine + A + H2O. The catalysed reaction is 2-(5Z,8Z,11Z,14Z)-eicosatetraenoyl-sn-glycero-3-phosphocholine + AH2 + O2 = 2-[(11R)-hydroxy-(5Z,8Z,12E,14Z)-eicosatetraenoyl]-sn-glycero-3-phosphocholine + A + H2O. It catalyses the reaction (9Z,12Z)-octadecadienoate + AH2 + O2 = 9-hydroxy-(10E,12Z)-octadecadienoate + A + H2O. It carries out the reaction (9Z,12Z)-octadecadienoate + AH2 + O2 = 13-hydroxy-(9Z,11E)-octadecadienoate + A + H2O. The enzyme catalyses (5Z,8Z,11Z,14Z)-eicosatetraenoate + AH2 + O2 = (15R)-hydroxy-(5Z,8Z,11Z,13E)-eicosatetraenoate + A + H2O. The catalysed reaction is (5Z,8Z,11Z,14Z)-eicosatetraenoate + AH2 + O2 = (11R)-hydroxy-(5Z,8Z,12E,14Z)-eicosatetraenoate + A + H2O. It catalyses the reaction (5Z,8Z,11Z,14Z,17Z)-eicosapentaenoate + AH2 + O2 = (11R)-hydroxy-(5Z,8Z,12E,14Z,17Z)-eicosapentaenoate + A + H2O. It carries out the reaction (5Z,8Z,11Z,14Z,17Z)-eicosapentaenoate + AH2 + O2 = (18S)-hydroxy-(5Z,8Z,11Z,14Z,16E)-eicosapentaenoate + A + H2O. The enzyme catalyses (5Z,8Z,11Z,14Z,17Z)-eicosapentaenoate + AH2 + O2 = (18R)-hydroxy-(5Z,8Z,11Z,14Z,16E)-eicosapentaenoate + A + H2O. The catalysed reaction is (5Z,8Z,11Z,14Z,17Z)-eicosapentaenoate + AH2 + O2 = (15R)-hydroxy-(5Z,8Z,11Z,13E,17Z)-eicosapentaenoate + A + H2O. It catalyses the reaction (5Z,8Z,11Z,14Z,17Z)-eicosapentaenoate + AH2 + O2 = (15S)-hydroxy-(5Z,8Z,11Z,13E,17Z)-eicosapentaenoate + A + H2O. It carries out the reaction (7Z,10Z,13Z,16Z,19Z)-docosapentaenoate + AH2 + O2 = 13R-hydroxy-(7Z,10Z,14E,16Z,19Z)-docosapentaenoate + A + H2O. The enzyme catalyses (4Z,7Z,10Z,13Z,16Z,19Z)-docosahexaenoate + AH2 + O2 = 13-hydroxy-(4Z,7Z,10Z,14E,16Z,19Z)-docosahexaenoate + A + H2O. The catalysed reaction is (5S)-hydroxy-(6E,8Z,11Z,14Z)-eicosatetraenoate + AH2 + O2 = (5S,15R)-dihydroxy-(6E,8Z,11Z,13E)-eicosatetraenoate + A + H2O. It catalyses the reaction (4Z,7Z,10Z,13Z,16Z,19Z)-docosahexaenoate + AH2 + O2 = 17R-hydroxy-(4Z,7Z,10Z,13Z,15E,19Z)-docosahexaenoate + A + H2O. It carries out the reaction (5S)-hydroxy-(6E,8Z,11Z,14Z)-eicosatetraenoate + AH2 + O2 = (5S,15S)-dihydroxy-(6E,8Z,11Z,13E)-eicosatetraenoate + A + H2O. The enzyme catalyses (5S)-hydroxy-(6E,8Z,11Z,14Z)-eicosatetraenoate + AH2 + O2 = (5S,11R)-dihydroxy-(6E,8Z,12E,14Z)-eicosatetraenoate + A + H2O. The catalysed reaction is 2-(5Z,8Z,11Z,14Z-eicosatetraenoyl)-glycerol + 2 O2 = 2-glyceryl-prostaglandin G2. It catalyses the reaction 2-glyceryl-prostaglandin G2 + AH2 = 2-glyceryl-prostaglandin H2 + A + H2O. It carries out the reaction (5Z,8Z,11Z,14Z)-eicosatetraenoate + O2 = (15R)-hydroperoxy-(5Z,8Z,11Z,13E)-eicosatetraenoate. The enzyme catalyses (5Z,8Z,11Z,14Z)-eicosatetraenoate + O2 = 11R-hydroperoxy-(5Z,8Z,12E,14Z)-eicosatetraenoate. The catalysed reaction is (9Z,12Z)-octadecadienoate + AH2 + O2 = (9R)-hydroxy-(10E,12Z)-octadecadienoate + A + H2O. It catalyses the reaction (9Z,12Z)-octadecadienoate + AH2 + O2 = (9S)-hydroxy-(10E,12Z)-octadecadienoate + A + H2O. It carries out the reaction (9Z,12Z)-octadecadienoate + AH2 + O2 = (13S)-hydroxy-(9Z,11E)-octadecadienoate + A + H2O. The enzyme catalyses (9Z,12Z)-octadecadienoate + AH2 + O2 = (13R)-hydroxy-(9Z,11E)-octadecadienoate + A + H2O. The protein operates within lipid metabolism; prostaglandin biosynthesis. The cyclooxygenase activity is inhibited by nonsteroidal anti-inflammatory drugs (NSAIDs) including aspirin, ibuprofen, flurbiprofen, celecoxib, flufenamic, mefenamic and tolfenamic acids as well as by hydroperoxide scavenger erythrocyte glutathione peroxidase GPX1. Aspirin triggers enzyme acetylation turning off its ability to generate pro-inflammatory prostaglandins, but switches on its capacity to produce anti-inflammatory lipid mediators involved in inflammation resolution. Aspirin enhances lipoxygenase-type activity toward production of epimers with R stereochemistry such as 15R-HETE, 18R-HEPE, 15R-HEPE and 17R-HDHA. Atorvastatin, a cholesterol-lowering drug, triggers enzyme S-nitrosylation increasing production of 13-series resolvins (RvTs). Functionally, dual cyclooxygenase and peroxidase in the biosynthesis pathway of prostanoids, a class of C20 oxylipins mainly derived from arachidonate ((5Z,8Z,11Z,14Z)-eicosatetraenoate, AA, C20:4(n-6)), with a particular role in the inflammatory response. The cyclooxygenase activity oxygenates AA to the hydroperoxy endoperoxide prostaglandin G2 (PGG2), and the peroxidase activity reduces PGG2 to the hydroxy endoperoxide prostaglandin H2 (PGH2), the precursor of all 2-series prostaglandins and thromboxanes. This complex transformation is initiated by abstraction of hydrogen at carbon 13 (with S-stereochemistry), followed by insertion of molecular O2 to form the endoperoxide bridge between carbon 9 and 11 that defines prostaglandins. The insertion of a second molecule of O2 (bis-oxygenase activity) yields a hydroperoxy group in PGG2 that is then reduced to PGH2 by two electrons. Similarly catalyzes successive cyclooxygenation and peroxidation of dihomo-gamma-linoleate (DGLA, C20:3(n-6)) and eicosapentaenoate (EPA, C20:5(n-3)) to corresponding PGH1 and PGH3, the precursors of 1- and 3-series prostaglandins. In an alternative pathway of prostanoid biosynthesis, converts 2-arachidonoyl lysophopholipids to prostanoid lysophopholipids, which are then hydrolyzed by intracellular phospholipases to release free prostanoids. Metabolizes 2-arachidonoyl glycerol yielding the glyceryl ester of PGH2, a process that can contribute to pain response. Generates lipid mediators from n-3 and n-6 polyunsaturated fatty acids (PUFAs) via a lipoxygenase-type mechanism. Oxygenates PUFAs to hydroperoxy compounds and then reduces them to corresponding alcohols. Plays a role in the generation of resolution phase interaction products (resolvins) during both sterile and infectious inflammation. Metabolizes docosahexaenoate (DHA, C22:6(n-3)) to 17R-HDHA, a precursor of the D-series resolvins (RvDs). As a component of the biosynthetic pathway of E-series resolvins (RvEs), converts eicosapentaenoate (EPA, C20:5(n-3)) primarily to 18S-HEPE that is further metabolized by ALOX5 and LTA4H to generate 18S-RvE1 and 18S-RvE2. In vascular endothelial cells, converts docosapentaenoate (DPA, C22:5(n-3)) to 13R-HDPA, a precursor for 13-series resolvins (RvTs) shown to activate macrophage phagocytosis during bacterial infection. In activated leukocytes, contributes to oxygenation of hydroxyeicosatetraenoates (HETE) to diHETES (5,15-diHETE and 5,11-diHETE). Can also use linoleate (LA, (9Z,12Z)-octadecadienoate, C18:2(n-6)) as substrate and produce hydroxyoctadecadienoates (HODEs) in a regio- and stereospecific manner, being (9R)-HODE ((9R)-hydroxy-(10E,12Z)-octadecadienoate) and (13S)-HODE ((13S)-hydroxy-(9Z,11E)-octadecadienoate) its major products. During neuroinflammation, plays a role in neuronal secretion of specialized preresolving mediators (SPMs) 15R-lipoxin A4 that regulates phagocytic microglia. In Homo sapiens (Human), this protein is Prostaglandin G/H synthase 2.